We begin with the raw amino-acid sequence, 112 residues long: Small ribosomal subunit protein bS6 (112 aa).

Belongs to the bacterial ribosomal protein bS6 family.

Binds together with bS18 to 16S ribosomal RNA. This chain is Small ribosomal subunit protein bS6, found in Chlamydia caviae (strain ATCC VR-813 / DSM 19441 / 03DC25 / GPIC) (Chlamydophila caviae).